Reading from the N-terminus, the 266-residue chain is Type III pantothenate kinase (266 aa).

An ATP-binding site is contributed by aspartate 6–valine 13. Substrate-binding positions include tyrosine 100 and glycine 107–arginine 110. The Proton acceptor role is filled by aspartate 109. Residue aspartate 129 coordinates K(+). Threonine 132 contributes to the ATP binding site. Threonine 184 lines the substrate pocket.

It belongs to the type III pantothenate kinase family. In terms of assembly, homodimer. NH4(+) is required as a cofactor. Requires K(+) as cofactor.

Its subcellular location is the cytoplasm. It catalyses the reaction (R)-pantothenate + ATP = (R)-4'-phosphopantothenate + ADP + H(+). It participates in cofactor biosynthesis; coenzyme A biosynthesis; CoA from (R)-pantothenate: step 1/5. In terms of biological role, catalyzes the phosphorylation of pantothenate (Pan), the first step in CoA biosynthesis. This Clostridium beijerinckii (strain ATCC 51743 / NCIMB 8052) (Clostridium acetobutylicum) protein is Type III pantothenate kinase.